We begin with the raw amino-acid sequence, 476 residues long: MPDFFSFINSVLWGSVMIYLLFGAGCWFTFRTGFVQFRYIRQFGKSLKNSIHPQPGGLTSFQSLCTSLAARVGSGNLAGVALAITAGGPGAVFWMWVAAFIGMATSFAECSLAQLYKERDVNGQFRGGPAWYMARGLGMRWMGVLFAVFLLIAYGIIFSGVQANAVARALSFSFDFPPLVTGIILAVFTLLAITRGLHGVARLMQGFVPLMAIIWVLTSLVICVMNIGQLPHVIWSIFESAFGWQEAAGGAAGYTLSQAITNGFQRSMFSNEAGMGSTPNAAAAAASWPPHPAAQGIVQMIGIFIDTLVICTASAMLILLAGNGTTYMPLEGIQLIQKAMRVLMGSWGAEFVTLVVILFAFSSIVANYIYAENNLFFLRLNNPKAIWCLRICTFATVIGGTLLSLPLMWQLADIIMACMAITNLTAILLLSPVVHTIASDYLRQRKLGVRPVFDPLRYPDIGRQLSPDAWDDVSQE.

Transmembrane regions (helical) follow at residues 4–24, 81–101, 141–161, 174–194, 207–227, 233–253, 300–320, 351–371, 391–411, and 414–434; these read FFSF…LFGA, ALAI…AAFI, WMGV…FSGV, FDFP…LAIT, FVPL…VMNI, VIWS…GAAG, MIGI…LILL, FVTL…YIYA, ICTF…MWQL, and IIMA…SPVV.

This sequence belongs to the alanine or glycine:cation symporter (AGCS) (TC 2.A.25) family.

The protein localises to the cell inner membrane. This is an uncharacterized protein from Escherichia coli (strain K12).